We begin with the raw amino-acid sequence, 434 residues long: N-acylneuraminate cytidylyltransferase (434 aa).

Methionine 1 carries the N-acetylmethionine modification. The interval methionine 1–proline 42 is disordered. The short motif at proline 15 to serine 31 is the BC1 motif element. Arginine 37 and arginine 52 each carry omega-N-methylarginine. Arginine 52, asparagine 62, arginine 111, serine 120, serine 122, and glutamine 143 together coordinate substrate. The BC2 motif signature appears at lysine 200 to aspartate 206. Residue arginine 201 is part of the active site. A BC3 motif motif is present at residues lysine 269 to lysine 276.

Belongs to the CMP-NeuNAc synthase family. As to quaternary structure, homotetramer; the active enzyme is formed by a dimer of dimers.

The protein localises to the nucleus. It carries out the reaction an N-acylneuraminate + CTP = a CMP-N-acyl-beta-neuraminate + diphosphate. It participates in amino-sugar metabolism; N-acetylneuraminate metabolism. In terms of biological role, catalyzes the activation of N-acetylneuraminic acid (NeuNAc) to cytidine 5'-monophosphate N-acetylneuraminic acid (CMP-NeuNAc), a substrate required for the addition of sialic acid. Has some activity toward NeuNAc, N-glycolylneuraminic acid (Neu5Gc) or 2-keto-3-deoxy-D-glycero-D-galacto-nononic acid (KDN). The protein is N-acylneuraminate cytidylyltransferase (CMAS) of Bos taurus (Bovine).